The sequence spans 365 residues: Cytosolic 5'-nucleotidase 1A (365 aa).

The segment covering 1-11 (MEPGQPREARE) has biased composition (basic and acidic residues). The tract at residues 1-23 (MEPGQPREAREPGPGAETAAVPR) is disordered. Catalysis depends on aspartate 208, which acts as the Nucleophile.

It belongs to the 5'-nucleotidase type 3 family. It depends on Mg(2+) as a cofactor.

The protein localises to the cytoplasm. It carries out the reaction a ribonucleoside 5'-phosphate + H2O = a ribonucleoside + phosphate. The catalysed reaction is a 2'-deoxyribonucleoside 5'-phosphate + H2O = a 2'-deoxyribonucleoside + phosphate. It catalyses the reaction IMP + H2O = inosine + phosphate. The enzyme catalyses AMP + H2O = adenosine + phosphate. It carries out the reaction dCMP + H2O = 2'-deoxycytidine + phosphate. With respect to regulation, activated by ADP. In terms of biological role, catalyzes the hydrolysis of ribonucleotide and deoxyribonucleotide monophosphates, releasing inorganic phosphate and the corresponding nucleoside. AMP is the major substrate but can also hydrolyze dCMP and IMP. This Mus musculus (Mouse) protein is Cytosolic 5'-nucleotidase 1A (Nt5c1a).